The sequence spans 307 residues: Lactamase-like protein vrtG (307 aa).

Residues H97, H99, D101, and H102 each coordinate Zn(2+). The active-site Proton donor/acceptor is D101.

Belongs to the metallo-beta-lactamase superfamily. Zn(2+) is required as a cofactor.

Its pathway is secondary metabolite biosynthesis; terpenoid biosynthesis. Functionally, lactamase-like protein; part of the gene cluster that mediates the biosynthesis of viridicatumtoxin, a tetracycline-like fungal meroterpenoid with a unique, fused spirobicyclic ring system. The first step of the pathway is the production of the malonamoyl-CoA starter unit for the polyketide synthase vrtA. The aldolase vrtJ may be involved in the synthesis of the malonamate substrate for malonamoyl-CoA synthetase vrtB. The polyketide synthase vrtA then may utilize the malonamoyl-CoA starter unit, followed by sequential condensation of eight malonyl-CoA units to form the polyketide backbone. The cyclization of the last ring could be mediated by the lactamase-like protein vrtG. The proposed post-PKS tailoring steps are a hydroxylation at C5 catalyzed the cytochrome P450 monooxygenase vrtE, a hydroxylation at C12a catalyzed by VrtH and/or VrtI, and an O-methylation by the O-methyltransferase vrtF. VrtC is then proposed to catalyze the transfer of a geranyl group synthesized by vrtD to the aromatic C ring of the tetracyclic polyketide intermediate of viridicatumtoxin to yield previridicatumtoxin. Finally, the cytochrome P450 monooxygenase vrtK catalyzes the spirocyclization of the geranyl moiety of previridicatumtoxin to afford viridicatumtoxin. This Penicillium aethiopicum protein is Lactamase-like protein vrtG.